Consider the following 120-residue polypeptide: Large ribosomal subunit protein bL20 (120 aa).

The protein belongs to the bacterial ribosomal protein bL20 family.

In terms of biological role, binds directly to 23S ribosomal RNA and is necessary for the in vitro assembly process of the 50S ribosomal subunit. It is not involved in the protein synthesizing functions of that subunit. The protein is Large ribosomal subunit protein bL20 of Xanthobacter autotrophicus (strain ATCC BAA-1158 / Py2).